The primary structure comprises 230 residues: Terminal protein (230 aa).

Residues arginine 222 to lysine 230 carry the Nuclear localization signal motif.

Its subcellular location is the host nucleus. The protein resides in the virion. DNA terminal protein is linked to the 5'-ends of both strands of the genome through a phosphodiester bond between the beta-hydroxyl group of a threonine residue and the 5'-phosphate of the terminal deoxyadenylate. This protein is essential for DNA replication and is involved in the priming of DNA elongation. The protein is Terminal protein (4) of Streptococcus pneumoniae (Bacteriophage Cp-1).